A 194-amino-acid polypeptide reads, in one-letter code: MIGRLRGVLTSKTPPWLVVDVCGVGYELEVPMSTFCELPDVGYEVNLFTHYTQKDDSAALYGFLSESERRLFRHLQRVSGIGTKIALAILSSVSVDTFAGLIQAGDANALTVIPGVGKKTAERMLVELRDRAADFNNGISTSGKLNLDTVSEAALALQQLGYKPAEAARMARDAGTESDDVAIVIKKALQTVLR.

The segment at 1–64 (MIGRLRGVLT…DDSAALYGFL (64 aa)) is domain I. A domain II region spans residues 65 to 140 (SESERRLFRH…RAADFNNGIS (76 aa)). The tract at residues 140–144 (STSGK) is flexible linker. The domain III stretch occupies residues 145-194 (LNLDTVSEAALALQQLGYKPAEAARMARDAGTESDDVAIVIKKALQTVLR).

Belongs to the RuvA family. In terms of assembly, homotetramer. Forms an RuvA(8)-RuvB(12)-Holliday junction (HJ) complex. HJ DNA is sandwiched between 2 RuvA tetramers; dsDNA enters through RuvA and exits via RuvB. An RuvB hexamer assembles on each DNA strand where it exits the tetramer. Each RuvB hexamer is contacted by two RuvA subunits (via domain III) on 2 adjacent RuvB subunits; this complex drives branch migration. In the full resolvosome a probable DNA-RuvA(4)-RuvB(12)-RuvC(2) complex forms which resolves the HJ.

Its subcellular location is the cytoplasm. In terms of biological role, the RuvA-RuvB-RuvC complex processes Holliday junction (HJ) DNA during genetic recombination and DNA repair, while the RuvA-RuvB complex plays an important role in the rescue of blocked DNA replication forks via replication fork reversal (RFR). RuvA specifically binds to HJ cruciform DNA, conferring on it an open structure. The RuvB hexamer acts as an ATP-dependent pump, pulling dsDNA into and through the RuvAB complex. HJ branch migration allows RuvC to scan DNA until it finds its consensus sequence, where it cleaves and resolves the cruciform DNA. The polypeptide is Holliday junction branch migration complex subunit RuvA (Xylella fastidiosa (strain M23)).